Reading from the N-terminus, the 442-residue chain is tRNA modification GTPase MnmE (442 aa).

Positions 21, 79, and 118 each coordinate (6S)-5-formyl-5,6,7,8-tetrahydrofolate. The TrmE-type G domain occupies G214–N367. Position 224 (N224) interacts with K(+). Residues N224–S229, S243–T249, and D268–G271 contribute to the GTP site. S228 is a binding site for Mg(2+). K(+) contacts are provided by S243, I245, and T248. T249 provides a ligand contact to Mg(2+). (6S)-5-formyl-5,6,7,8-tetrahydrofolate is bound at residue K442.

It belongs to the TRAFAC class TrmE-Era-EngA-EngB-Septin-like GTPase superfamily. TrmE GTPase family. As to quaternary structure, homodimer. Heterotetramer of two MnmE and two MnmG subunits. The cofactor is K(+).

The protein localises to the cytoplasm. Its function is as follows. Exhibits a very high intrinsic GTPase hydrolysis rate. Involved in the addition of a carboxymethylaminomethyl (cmnm) group at the wobble position (U34) of certain tRNAs, forming tRNA-cmnm(5)s(2)U34. The chain is tRNA modification GTPase MnmE from Campylobacter jejuni subsp. jejuni serotype O:2 (strain ATCC 700819 / NCTC 11168).